The primary structure comprises 634 residues: Heat shock 70-related protein 1, mitochondrial (634 aa).

The transit peptide at 1 to 20 (MFARRVCGSAAASAACLARH) directs the protein to the mitochondrion. The stretch at 538–614 (SEQHAEADRV…AAATDKLQKA (77 aa)) forms a coiled coil.

Belongs to the heat shock protein 70 family.

The protein localises to the mitochondrion. The protein is Heat shock 70-related protein 1, mitochondrial (HSP70.1) of Leishmania major.